The chain runs to 412 residues: Serine hydroxymethyltransferase (412 aa).

Residues leucine 117 and 121–123 (GHL) each bind (6S)-5,6,7,8-tetrahydrofolate. Position 226 is an N6-(pyridoxal phosphate)lysine (lysine 226).

This sequence belongs to the SHMT family. Homodimer. It depends on pyridoxal 5'-phosphate as a cofactor.

It localises to the cytoplasm. The catalysed reaction is (6R)-5,10-methylene-5,6,7,8-tetrahydrofolate + glycine + H2O = (6S)-5,6,7,8-tetrahydrofolate + L-serine. It functions in the pathway one-carbon metabolism; tetrahydrofolate interconversion. Its pathway is amino-acid biosynthesis; glycine biosynthesis; glycine from L-serine: step 1/1. Functionally, catalyzes the reversible interconversion of serine and glycine with tetrahydrofolate (THF) serving as the one-carbon carrier. This reaction serves as the major source of one-carbon groups required for the biosynthesis of purines, thymidylate, methionine, and other important biomolecules. Also exhibits THF-independent aldolase activity toward beta-hydroxyamino acids, producing glycine and aldehydes, via a retro-aldol mechanism. The sequence is that of Serine hydroxymethyltransferase from Staphylococcus aureus (strain USA300).